The primary structure comprises 195 residues: Holliday junction branch migration complex subunit RuvA (195 aa).

The interval 1–61 (MYEYLDGVVV…ENDQTLYGFK (61 aa)) is domain I. The tract at residues 62 to 139 (KAEDKELFLN…AVENEVGTLF (78 aa)) is domain II. The interval 139-143 (FDLST) is flexible linker. Residues 144 to 195 (TSNQALDEALEALIALGYSEKEVKKLTKKLSEQTDRTTDQYISSGLKLLMKG) form a domain III region.

This sequence belongs to the RuvA family. In terms of assembly, homotetramer. Forms an RuvA(8)-RuvB(12)-Holliday junction (HJ) complex. HJ DNA is sandwiched between 2 RuvA tetramers; dsDNA enters through RuvA and exits via RuvB. An RuvB hexamer assembles on each DNA strand where it exits the tetramer. Each RuvB hexamer is contacted by two RuvA subunits (via domain III) on 2 adjacent RuvB subunits; this complex drives branch migration. In the full resolvosome a probable DNA-RuvA(4)-RuvB(12)-RuvC(2) complex forms which resolves the HJ.

The protein resides in the cytoplasm. Its function is as follows. The RuvA-RuvB-RuvC complex processes Holliday junction (HJ) DNA during genetic recombination and DNA repair, while the RuvA-RuvB complex plays an important role in the rescue of blocked DNA replication forks via replication fork reversal (RFR). RuvA specifically binds to HJ cruciform DNA, conferring on it an open structure. The RuvB hexamer acts as an ATP-dependent pump, pulling dsDNA into and through the RuvAB complex. HJ branch migration allows RuvC to scan DNA until it finds its consensus sequence, where it cleaves and resolves the cruciform DNA. The protein is Holliday junction branch migration complex subunit RuvA of Pediococcus pentosaceus (strain ATCC 25745 / CCUG 21536 / LMG 10740 / 183-1w).